We begin with the raw amino-acid sequence, 258 residues long: Tryptophan synthase alpha chain (258 aa).

Catalysis depends on proton acceptor residues Glu52 and Asp63.

It belongs to the TrpA family. Tetramer of two alpha and two beta chains.

It carries out the reaction (1S,2R)-1-C-(indol-3-yl)glycerol 3-phosphate + L-serine = D-glyceraldehyde 3-phosphate + L-tryptophan + H2O. It functions in the pathway amino-acid biosynthesis; L-tryptophan biosynthesis; L-tryptophan from chorismate: step 5/5. Functionally, the alpha subunit is responsible for the aldol cleavage of indoleglycerol phosphate to indole and glyceraldehyde 3-phosphate. This is Tryptophan synthase alpha chain from Streptococcus pneumoniae serotype 4 (strain ATCC BAA-334 / TIGR4).